The primary structure comprises 254 residues: tRNA (guanine-N(1)-)-methyltransferase (254 aa).

S-adenosyl-L-methionine-binding positions include G112 and I131 to L136.

Belongs to the RNA methyltransferase TrmD family. In terms of assembly, homodimer.

It is found in the cytoplasm. It catalyses the reaction guanosine(37) in tRNA + S-adenosyl-L-methionine = N(1)-methylguanosine(37) in tRNA + S-adenosyl-L-homocysteine + H(+). Functionally, specifically methylates guanosine-37 in various tRNAs. The protein is tRNA (guanine-N(1)-)-methyltransferase of Persephonella marina (strain DSM 14350 / EX-H1).